Consider the following 112-residue polypeptide: MALGLNVQEPEETCADQNCPFHGELSVRGQTLNGEVASTDMEKTVVVEREYDVKVPKYDRFMKRRSRVPAHAPDCLDLAVGDTVTIAECRPLSKTKSHVVVGVVADEQDGDA.

This sequence belongs to the universal ribosomal protein uS17 family. Part of the 30S ribosomal subunit.

One of the primary rRNA binding proteins, it binds specifically to the 5'-end of 16S ribosomal RNA. The sequence is that of Small ribosomal subunit protein uS17 from Haloarcula marismortui (strain ATCC 43049 / DSM 3752 / JCM 8966 / VKM B-1809) (Halobacterium marismortui).